Here is a 492-residue protein sequence, read N- to C-terminus: Dipeptide permease D (492 aa).

A run of 13 helical transmembrane segments spans residues 14-34 (VVALQIWEYFSFYGMRALLIL), 49-69 (ALFSAYCSLVYVTPILGGYLA), 91-111 (LVLGASETAPLFLYLSLAIIV), 138-158 (GGFSLMYAAGNIGSIIAPIAC), 167-187 (WAMGFALAAIGMVAGLVIFLC), 212-232 (NWGWLLVLLVTAPLLIAVLFW), 236-256 (SVYALIVATAIGLAVLARIYL), 269-289 (LIVVLTAFSLLFWAFAQQGGS), 312-332 (MFQSINAFAVMLCGMVLAWLV), 344-364 (IWGKFALGLGLMSAGFCILTL), 379-399 (LMVLGLAVMGFAELFIDPVAM), 413-433 (VLTGIYMLLSGAIANYLAGVI), and 458-478 (VFSQITWGALACVGVVLVIWL).

The protein belongs to the major facilitator superfamily. Proton-dependent oligopeptide transporter (POT/PTR) (TC 2.A.17) family. DtpD subfamily.

The protein localises to the cell inner membrane. Probable proton-dependent permease that transports dipeptides. The polypeptide is Dipeptide permease D (Klebsiella pneumoniae subsp. pneumoniae (strain ATCC 700721 / MGH 78578)).